An 80-amino-acid chain; its full sequence is MSFLDKFFGKEKSSAKSASDRLKLVLAHERAVNLPYLEEMKREILEVIKKYTHAEKIEIKADSNQQIDTLEVEIVLGKNS.

Belongs to the MinE family.

In terms of biological role, prevents the cell division inhibition by proteins MinC and MinD at internal division sites while permitting inhibition at polar sites. This ensures cell division at the proper site by restricting the formation of a division septum at the midpoint of the long axis of the cell. This Wolinella succinogenes (strain ATCC 29543 / DSM 1740 / CCUG 13145 / JCM 31913 / LMG 7466 / NCTC 11488 / FDC 602W) (Vibrio succinogenes) protein is Cell division topological specificity factor.